Reading from the N-terminus, the 994-residue chain is Alpha-mannosidase F (994 aa).

The N-terminal stretch at 1–20 is a signal peptide; that stretch reads MKNFYYFILILLFFNEVCYS. Zn(2+) contacts are provided by His35, Asp37, and Asp151. The active-site Nucleophile is the Asp151. N-linked (GlcNAc...) asparagine glycosylation is found at Asn247 and Asn381. Residue His392 coordinates Zn(2+). 3 N-linked (GlcNAc...) asparagine glycosylation sites follow: Asn554, Asn712, and Asn932.

Belongs to the glycosyl hydrolase 38 family. Zn(2+) serves as cofactor.

The protein localises to the secreted. It catalyses the reaction Hydrolysis of terminal, non-reducing alpha-D-mannose residues in alpha-D-mannosides.. The polypeptide is Alpha-mannosidase F (manF) (Dictyostelium discoideum (Social amoeba)).